Here is a 99-residue protein sequence, read N- to C-terminus: UPF0235 protein Neut_2146 (99 aa).

This sequence belongs to the UPF0235 family.

The polypeptide is UPF0235 protein Neut_2146 (Nitrosomonas eutropha (strain DSM 101675 / C91 / Nm57)).